Consider the following 140-residue polypeptide: Ribosomal RNA large subunit methyltransferase H (140 aa).

Leu55 and Gly87 together coordinate S-adenosyl-L-methionine.

The protein belongs to the RNA methyltransferase RlmH family. Homodimer.

It is found in the cytoplasm. The catalysed reaction is pseudouridine(1915) in 23S rRNA + S-adenosyl-L-methionine = N(3)-methylpseudouridine(1915) in 23S rRNA + S-adenosyl-L-homocysteine + H(+). In terms of biological role, specifically methylates the pseudouridine at position 1915 (m3Psi1915) in 23S rRNA. The chain is Ribosomal RNA large subunit methyltransferase H from Rhizorhabdus wittichii (strain DSM 6014 / CCUG 31198 / JCM 15750 / NBRC 105917 / EY 4224 / RW1) (Sphingomonas wittichii).